We begin with the raw amino-acid sequence, 172 residues long: Adenine phosphoribosyltransferase (172 aa).

The protein belongs to the purine/pyrimidine phosphoribosyltransferase family. As to quaternary structure, homodimer.

It is found in the cytoplasm. It catalyses the reaction AMP + diphosphate = 5-phospho-alpha-D-ribose 1-diphosphate + adenine. Its pathway is purine metabolism; AMP biosynthesis via salvage pathway; AMP from adenine: step 1/1. Functionally, catalyzes a salvage reaction resulting in the formation of AMP, that is energically less costly than de novo synthesis. In Synechocystis sp. (strain ATCC 27184 / PCC 6803 / Kazusa), this protein is Adenine phosphoribosyltransferase.